A 438-amino-acid polypeptide reads, in one-letter code: sn-glycerol-3-phosphate-binding periplasmic protein UgpB (438 aa).

The first 23 residues, 1–23 (MKPLHYTASALALGLALMGNAQA), serve as a signal peptide directing secretion. The sn-glycerol 3-phosphate site is built by Y65, E89, S144, S270, G307, Y346, and R397.

It belongs to the bacterial solute-binding protein 1 family. In terms of assembly, the complex is composed of two ATP-binding proteins (UgpC), two transmembrane proteins (UgpA and UgpE) and a solute-binding protein (UgpB).

Its subcellular location is the periplasm. Its function is as follows. Part of the ABC transporter complex UgpBAEC involved in sn-glycerol-3-phosphate (G3P) import. Binds G3P. The sequence is that of sn-glycerol-3-phosphate-binding periplasmic protein UgpB (ugpB) from Escherichia coli O157:H7.